Here is a 296-residue protein sequence, read N- to C-terminus: Phosphatidylglycerol--prolipoprotein diacylglyceryl transferase (296 aa).

A run of 4 helical transmembrane segments spans residues 28-48, 72-92, 110-130, and 139-159; these read WYGL…IYLA, FALY…ILFY, GGLA…IFSW, and LTFL…AFMI. Arginine 160 is a binding site for a 1,2-diacyl-sn-glycero-3-phospho-(1'-sn-glycerol). A run of 3 helical transmembrane segments spans residues 197 to 217, 226 to 246, and 263 to 283; these read VQLY…FLSY, GWVT…AEFF, and GQIL…ACFL.

The protein belongs to the Lgt family.

It localises to the cell inner membrane. The catalysed reaction is L-cysteinyl-[prolipoprotein] + a 1,2-diacyl-sn-glycero-3-phospho-(1'-sn-glycerol) = an S-1,2-diacyl-sn-glyceryl-L-cysteinyl-[prolipoprotein] + sn-glycerol 1-phosphate + H(+). It participates in protein modification; lipoprotein biosynthesis (diacylglyceryl transfer). In terms of biological role, catalyzes the transfer of the diacylglyceryl group from phosphatidylglycerol to the sulfhydryl group of the N-terminal cysteine of a prolipoprotein, the first step in the formation of mature lipoproteins. This is Phosphatidylglycerol--prolipoprotein diacylglyceryl transferase from Chlamydia caviae (strain ATCC VR-813 / DSM 19441 / 03DC25 / GPIC) (Chlamydophila caviae).